The sequence spans 415 residues: Casein kinase 1-like protein 3 (415 aa).

The 269-residue stretch at 9 to 277 folds into the Protein kinase domain; sequence YKLGRKIGGG…FLKRLFRDLF (269 aa). Residues 15–23 and Lys38 each bind ATP; that span reads IGGGSFGEI. The active-site Proton acceptor is Asp128. Composition is skewed to polar residues over residues 303–314 and 373–415; these read NQSQAVPGSSNP and NMPS…SPEK. Disordered regions lie at residues 303-330 and 344-415; these read NQSQ…GPNI and NAIG…SPEK.

Belongs to the protein kinase superfamily. CK1 Ser/Thr protein kinase family. Casein kinase I subfamily. In terms of processing, slightly autophosphorylated. In terms of tissue distribution, expressed in seedlings, stems, leaves and flowers.

The protein localises to the cytoplasm. The protein resides in the nucleus. It catalyses the reaction L-seryl-[protein] + ATP = O-phospho-L-seryl-[protein] + ADP + H(+). It carries out the reaction L-threonyl-[protein] + ATP = O-phospho-L-threonyl-[protein] + ADP + H(+). Its function is as follows. Protein kinase involved in blue light responses (e.g. hypocotyl elongation and flowering) by phosphorylating CRY2 to reduce its stability. In Arabidopsis thaliana (Mouse-ear cress), this protein is Casein kinase 1-like protein 3.